Reading from the N-terminus, the 281-residue chain is Nucleotide-binding protein PSHAa2554 (281 aa).

8-15 (GRSGSGKS) contacts ATP. Position 56–59 (56–59 (DVRN)) interacts with GTP.

It belongs to the RapZ-like family.

Functionally, displays ATPase and GTPase activities. This is Nucleotide-binding protein PSHAa2554 from Pseudoalteromonas translucida (strain TAC 125).